The sequence spans 298 residues: MSAQRLRIAIQKKGRLSKECQELFKRCGMKFNISGERLVVHSENMPIDLLLVRDDDIPSLIMDGVVDLGVIGENELEEVRLERKALGEPSAFTTLRRLDFGGCRLSIAIDKDAVYNGPQDLAGKRIATTYSQLLKSFMDEKNIPFSTCILNGSVEVAPRAGLSDAIADLVSTGATLEANGLKEAEVIFRSKATLIQREGEFDADKAALIDKLLTRMQGCIQAKESKYIMLHAPTDKLEAIKSLLPGAEDPTVLPLSSDGAKVAVHLVSTENLFWETMEQLKALGASSILVLPIEKMME.

This sequence belongs to the ATP phosphoribosyltransferase family. Long subfamily. Mg(2+) serves as cofactor.

Its subcellular location is the cytoplasm. It carries out the reaction 1-(5-phospho-beta-D-ribosyl)-ATP + diphosphate = 5-phospho-alpha-D-ribose 1-diphosphate + ATP. Its pathway is amino-acid biosynthesis; L-histidine biosynthesis; L-histidine from 5-phospho-alpha-D-ribose 1-diphosphate: step 1/9. Feedback inhibited by histidine. Functionally, catalyzes the condensation of ATP and 5-phosphoribose 1-diphosphate to form N'-(5'-phosphoribosyl)-ATP (PR-ATP). Has a crucial role in the pathway because the rate of histidine biosynthesis seems to be controlled primarily by regulation of HisG enzymatic activity. In Aliivibrio salmonicida (strain LFI1238) (Vibrio salmonicida (strain LFI1238)), this protein is ATP phosphoribosyltransferase.